Reading from the N-terminus, the 128-residue chain is Large ribosomal subunit protein bL12 (128 aa).

Belongs to the bacterial ribosomal protein bL12 family. As to quaternary structure, homodimer. Part of the ribosomal stalk of the 50S ribosomal subunit. Forms a multimeric L10(L12)X complex, where L10 forms an elongated spine to which 2 to 4 L12 dimers bind in a sequential fashion. Binds GTP-bound translation factors.

Functionally, forms part of the ribosomal stalk which helps the ribosome interact with GTP-bound translation factors. Is thus essential for accurate translation. The protein is Large ribosomal subunit protein bL12 of Phenylobacterium zucineum (strain HLK1).